Reading from the N-terminus, the 273-residue chain is Ribonuclease Z (273 aa).

Positions 61, 63, 146, 169, and 233 each coordinate Zn(2+).

Belongs to the RNase Z family. In terms of assembly, homodimer. Zn(2+) is required as a cofactor.

It catalyses the reaction Endonucleolytic cleavage of RNA, removing extra 3' nucleotides from tRNA precursor, generating 3' termini of tRNAs. A 3'-hydroxy group is left at the tRNA terminus and a 5'-phosphoryl group is left at the trailer molecule.. Its function is as follows. Zinc phosphodiesterase, which displays some tRNA 3'-processing endonuclease activity. Probably involved in tRNA maturation, by removing a 3'-trailer from precursor tRNA. The sequence is that of Ribonuclease Z from Mycobacterium tuberculosis (strain ATCC 25177 / H37Ra).